The primary structure comprises 325 residues: Putative gluconeogenesis factor (325 aa).

Belongs to the gluconeogenesis factor family.

Its subcellular location is the cytoplasm. Its function is as follows. Required for morphogenesis under gluconeogenic growth conditions. The polypeptide is Putative gluconeogenesis factor (Streptococcus pyogenes serotype M1).